A 1010-amino-acid chain; its full sequence is Phosphoenolpyruvate carboxylase (1010 aa).

Residues 1 to 18 show a composition bias toward polar residues; it reads MIMRSPETSGASMPQSTA. Disordered regions lie at residues 1–36 and 132–154; these read MIMR…PGAG and LRPS…PPLA. Active-site residues include histidine 195 and lysine 652. The disordered stretch occupies residues 967–986; the sequence is QNRQPPMSESPGTPEDRRTY.

This sequence belongs to the PEPCase type 1 family. Requires Mg(2+) as cofactor.

The catalysed reaction is oxaloacetate + phosphate = phosphoenolpyruvate + hydrogencarbonate. Its function is as follows. Forms oxaloacetate, a four-carbon dicarboxylic acid source for the tricarboxylic acid cycle. The protein is Phosphoenolpyruvate carboxylase of Parasynechococcus marenigrum (strain WH8102).